Reading from the N-terminus, the 107-residue chain is High mobility group protein HMG-I/HMG-Y (107 aa).

Residues 1–13 (MSESGSKSSQPLA) show a composition bias toward polar residues. A disordered region spans residues 1–107 (MSESGSKSSQ…ISQESSEEEQ (107 aa)). S2 carries the N-acetylserine modification. K7 bears the N6-acetyllysine mark. ADP-ribosylserine is present on S8. An ADP-ribosylserine; alternate modification is found at S9. The residue at position 9 (S9) is a Phosphoserine; alternate. The residue at position 15 (K15) is an N6-acetyllysine; alternate. K15 is covalently cross-linked (Glycyl lysine isopeptide (Lys-Gly) (interchain with G-Cter in SUMO2); alternate). A compositionally biased stretch (basic and acidic residues) spans 15 to 24 (KQEKDGTEKR). Residues 21–31 (TEKRGRGRPRK) constitute a DNA-binding region (a.T hook 1). R26 bears the Asymmetric dimethylarginine; alternate mark. Residue R26 is modified to Omega-N-methylarginine; alternate. The residue at position 26 (R26) is a Symmetric dimethylarginine; alternate. Phosphoserine; by HIPK2 and CDC2 is present on S36. Position 39 is a phosphothreonine (T39). Phosphoserine is present on residues S44 and S49. T53 carries the phosphothreonine; by HIPK2 and CDC2 modification. 2 DNA-binding regions (a.T hook) span residues 53 to 63 (TPKRPRGRPKG) and 78 to 89 (APGRKPRGRPKK). Residues 53 to 77 (TPKRPRGRPKGSKNKGAAKTRKVTT) form an interaction with HIPK2 region. Over residues 55 to 74 (KRPRGRPKGSKNKGAAKTRK) the composition is skewed to basic residues. R58 and R60 each carry asymmetric dimethylarginine; by PRMT6; alternate. 2 positions are modified to omega-N-methylarginine; by PRMT6; alternate: R58 and R60. Over residues 93–107 (EEEEGISQESSEEEQ) the composition is skewed to acidic residues. Phosphoserine is present on residues S99, S102, and S103.

This sequence belongs to the HMGA family. Interacts with HIPK2. Isoforms HMG-I and HMG-Y can be phosphorylated by HIPK2. Phosphorylation may modulate DNA-binding affinity. Post-translationally, methylation at Arg-58 is mutually exclusive with methylation at Arg-60.

It is found in the nucleus. The protein resides in the chromosome. Its function is as follows. HMG-I/Y bind preferentially to the minor groove of A+T rich regions in double-stranded DNA. It is suggested that these proteins could function in nucleosome phasing and in the 3'-end processing of mRNA transcripts. They are also involved in the transcription regulation of genes containing, or in close proximity to A+T-rich regions. The chain is High mobility group protein HMG-I/HMG-Y (Hmga1) from Mus musculus (Mouse).